The following is a 279-amino-acid chain: MSVPTVLEKIVARKFEEVAARRVQVSLAELEAAARAADAPRGFARALLEQAARKQPAVIAEIKKASPSKGVLRADFVPADIARSYEAGGATCLSVLTDIDFFQGADEYLQQARAACALPVIRKDFMVDPYQIVEARALGADCVLLIVSCLDDVRMAELAAVAKDVGLDVLVEVHDGNELERALNTLDTPLVGINNRNLHTFEVSLETTLDLLPRIPRERLVVTESGILNRADVELMEISEVYAFLVGEAFMRAESPGAELQRLFFPERGRPTVVGKDPE.

It belongs to the TrpC family.

The enzyme catalyses 1-(2-carboxyphenylamino)-1-deoxy-D-ribulose 5-phosphate + H(+) = (1S,2R)-1-C-(indol-3-yl)glycerol 3-phosphate + CO2 + H2O. It participates in amino-acid biosynthesis; L-tryptophan biosynthesis; L-tryptophan from chorismate: step 4/5. The chain is Indole-3-glycerol phosphate synthase from Ectopseudomonas mendocina (strain ymp) (Pseudomonas mendocina).